A 596-amino-acid chain; its full sequence is Aspartate--tRNA(Asp/Asn) ligase (596 aa).

Position 173 (E173) interacts with L-aspartate. The tract at residues 197 to 200 (QLFK) is aspartate. An L-aspartate-binding site is contributed by R219. Residues 219–221 (RDE) and Q228 contribute to the ATP site. An L-aspartate-binding site is contributed by H450. E485 contributes to the ATP binding site. R492 lines the L-aspartate pocket. Position 537–540 (537–540 (GLDR)) interacts with ATP.

The protein belongs to the class-II aminoacyl-tRNA synthetase family. Type 1 subfamily. Homodimer.

It is found in the cytoplasm. The catalysed reaction is tRNA(Asx) + L-aspartate + ATP = L-aspartyl-tRNA(Asx) + AMP + diphosphate. Functionally, aspartyl-tRNA synthetase with relaxed tRNA specificity since it is able to aspartylate not only its cognate tRNA(Asp) but also tRNA(Asn). Reaction proceeds in two steps: L-aspartate is first activated by ATP to form Asp-AMP and then transferred to the acceptor end of tRNA(Asp/Asn). This chain is Aspartate--tRNA(Asp/Asn) ligase, found in Hydrogenovibrio crunogenus (strain DSM 25203 / XCL-2) (Thiomicrospira crunogena).